Consider the following 413-residue polypeptide: Tryptophan synthase beta chain (413 aa).

K106 is modified (N6-(pyridoxal phosphate)lysine).

Belongs to the TrpB family. In terms of assembly, tetramer of two alpha and two beta chains. Pyridoxal 5'-phosphate is required as a cofactor.

It catalyses the reaction (1S,2R)-1-C-(indol-3-yl)glycerol 3-phosphate + L-serine = D-glyceraldehyde 3-phosphate + L-tryptophan + H2O. It participates in amino-acid biosynthesis; L-tryptophan biosynthesis; L-tryptophan from chorismate: step 5/5. Functionally, the beta subunit is responsible for the synthesis of L-tryptophan from indole and L-serine. This is Tryptophan synthase beta chain from Methylorubrum populi (strain ATCC BAA-705 / NCIMB 13946 / BJ001) (Methylobacterium populi).